The primary structure comprises 230 residues: GDT1-like protein 4 (230 aa).

Transmembrane regions (helical) follow at residues 12-32 (LAMTFVSEIGDKTFFAAAILA), 39-59 (LVLAGCLSALIVMTILSATLG), 71-91 (THHITTLLFFGFGLWSLWDGF), 135-155 (AFLTQFFSPIFLKAFSINFFG), 175-195 (FGVVLGGVVAQFLCTTAAVIG), and 207-227 (IVALSGGMLFIIFGIQSYLTS).

The protein belongs to the GDT1 family.

Its subcellular location is the membrane. This chain is GDT1-like protein 4, found in Arabidopsis thaliana (Mouse-ear cress).